The primary structure comprises 79 residues: MVDAITVLTAIGITVLMLLMVISGAALIVKELNPNDIFTMQSLKFNRAVTIFKYIGLFIYIPGTIILYATYVKSLLMKS.

Residues 2–8 (VDAITVL) are Intravirion-facing. The chain crosses the membrane as a helical span at residues 9 to 29 (TAIGITVLMLLMVISGAALIV). The Virion surface segment spans residues 30 to 47 (KELNPNDIFTMQSLKFNR). Residues 48–68 (AVTIFKYIGLFIYIPGTIILY) traverse the membrane as a helical segment. At 69-79 (ATYVKSLLMKS) the chain is on the intravirion side.

Belongs to the orthopoxvirus OPG081 family.

Its subcellular location is the virion membrane. Its function is as follows. Envelope protein. This chain is Protein OPG081 (OPG081), found in Vaccinia virus (strain Western Reserve) (VACV).